The primary structure comprises 79 residues: ATP synthase subunit c (79 aa).

Helical transmembrane passes span 11 to 31 (MAAAVMMGLAAIGAAIGIGIL) and 53 to 73 (FFIVMGLVDAIPMIAVGLGLY).

The protein belongs to the ATPase C chain family. As to quaternary structure, F-type ATPases have 2 components, F(1) - the catalytic core - and F(0) - the membrane proton channel. F(1) has five subunits: alpha(3), beta(3), gamma(1), delta(1), epsilon(1). F(0) has three main subunits: a(1), b(2) and c(10-14). The alpha and beta chains form an alternating ring which encloses part of the gamma chain. F(1) is attached to F(0) by a central stalk formed by the gamma and epsilon chains, while a peripheral stalk is formed by the delta and b chains.

It localises to the cell inner membrane. In terms of biological role, f(1)F(0) ATP synthase produces ATP from ADP in the presence of a proton or sodium gradient. F-type ATPases consist of two structural domains, F(1) containing the extramembraneous catalytic core and F(0) containing the membrane proton channel, linked together by a central stalk and a peripheral stalk. During catalysis, ATP synthesis in the catalytic domain of F(1) is coupled via a rotary mechanism of the central stalk subunits to proton translocation. Key component of the F(0) channel; it plays a direct role in translocation across the membrane. A homomeric c-ring of between 10-14 subunits forms the central stalk rotor element with the F(1) delta and epsilon subunits. This chain is ATP synthase subunit c, found in Citrobacter koseri (strain ATCC BAA-895 / CDC 4225-83 / SGSC4696).